The sequence spans 391 residues: ETS-related transcription factor Elf-3 (391 aa).

Residues 65–151 (DPLAVLHLAE…AQLRDLTSNS (87 aa)) form the PNT domain. Residues 200 to 271 (YCSTYGPGAP…HGKRKRGRPR (72 aa)) form a disordered region. Polar residues predominate over residues 211–229 (PGSSDVSTARTATPQSSHA). The span at 242-261 (TESKVFPRDGFPDYKKGEPK) shows a compositional bias: basic and acidic residues. A compositionally biased stretch (basic residues) spans 262–271 (HGKRKRGRPR). A DNA-binding region (ETS) is located at residues 293-375 (THLWEFIRDI…DGRRLVYKFG (83 aa)).

The protein belongs to the ETS family. As to quaternary structure, interacts with TBP. Interacts with CREBBP and EP300; these act as transcriptional coactivators of ELF3 and positively modulate its function. Interacts with XRCC5/KU86 and XRCC6/KU70; these inhibit the ability of ELF3 to bind DNA and negatively modulate its transcriptional activity. Associated with CLND7 and POU2F3. Interacts with ZNF768. In terms of tissue distribution, expressed in small intestine, colon, lung, kidney and uterus. Also expressed in the corneal epithelium and conjunctiva of the developing and adult eye. Not detected in liver, spleen, thymus, brain, heart, skeletal muscle or ovary.

Its subcellular location is the cytoplasm. It localises to the nucleus. Functionally, transcriptional activator that binds and transactivates ETS sequences containing the consensus nucleotide core sequence GGA[AT]. Acts synergistically with POU2F3 to transactivate the SPRR2A promoter and with RUNX1 to transactivate the ANGPT1 promoter. Also transactivates collagenase, CCL20, CLND7, FLG, KRT8, NOS2, PTGS2, SPRR2B, TGFBR2 and TGM3 promoters. Represses KRT4 promoter activity. Involved in mediating vascular inflammation. May play an important role in epithelial cell differentiation and tumorigenesis. May be a critical downstream effector of the ERBB2 signaling pathway. May be associated with mammary gland development and involution. Plays an important role in the regulation of transcription with TATA-less promoters in preimplantation embryos, which is essential in preimplantation development. The sequence is that of ETS-related transcription factor Elf-3 from Mus musculus (Mouse).